The chain runs to 78 residues: Acyl carrier protein (78 aa).

In terms of domain architecture, Carrier spans 2 to 77 (SDIAERVKKI…DAIKFLEKNS (76 aa)). The residue at position 37 (S37) is an O-(pantetheine 4'-phosphoryl)serine.

Belongs to the acyl carrier protein (ACP) family. 4'-phosphopantetheine is transferred from CoA to a specific serine of apo-ACP by AcpS. This modification is essential for activity because fatty acids are bound in thioester linkage to the sulfhydryl of the prosthetic group.

It is found in the cytoplasm. Its pathway is lipid metabolism; fatty acid biosynthesis. Carrier of the growing fatty acid chain in fatty acid biosynthesis. In Methylorubrum extorquens (strain CM4 / NCIMB 13688) (Methylobacterium extorquens), this protein is Acyl carrier protein.